The primary structure comprises 313 residues: Cyclin-dependent kinase B2-1 (313 aa).

Position 1 is an N-acetylmethionine (methionine 1). The 291-residue stretch at 14–304 folds into the Protein kinase domain; it reads FEKLEKVGEG…AKMAMEHPYF (291 aa). Residues 20-28 and lysine 43 each bind ATP; that span reads VGEGTYGKV. The residue at position 25 (tyrosine 25) is a Phosphotyrosine. Aspartate 145 (proton acceptor) is an active-site residue. Threonine 179 carries the phosphothreonine modification.

Belongs to the protein kinase superfamily. CMGC Ser/Thr protein kinase family. CDC2/CDKX subfamily. In terms of assembly, interacts with CYCD4-1 and CKS1. Expressed in root tips, shoot apical meristem, leaf primordia vascular tissues and tapetum of anthers.

The catalysed reaction is L-seryl-[protein] + ATP = O-phospho-L-seryl-[protein] + ADP + H(+). The enzyme catalyses L-threonyl-[protein] + ATP = O-phospho-L-threonyl-[protein] + ADP + H(+). It catalyses the reaction [DNA-directed RNA polymerase] + ATP = phospho-[DNA-directed RNA polymerase] + ADP + H(+). The protein is Cyclin-dependent kinase B2-1 (CDKB2-1) of Arabidopsis thaliana (Mouse-ear cress).